Here is a 104-residue protein sequence, read N- to C-terminus: uncharacterized protein (104 aa).

This is an uncharacterized protein from Saccharomyces cerevisiae (strain ATCC 204508 / S288c) (Baker's yeast).